The primary structure comprises 461 residues: Glycine--tRNA ligase (461 aa).

Residues Arg-100 and Glu-163 each coordinate substrate. ATP contacts are provided by residues 195 to 197, 205 to 210, 282 to 283, and 326 to 329; these read RNE, FRTREF, EL, and GLGR. 210-214 lines the substrate pocket; that stretch reads FEQME. 322-326 provides a ligand contact to substrate; the sequence is EPAAG.

Belongs to the class-II aminoacyl-tRNA synthetase family. As to quaternary structure, homodimer.

The protein resides in the cytoplasm. The enzyme catalyses tRNA(Gly) + glycine + ATP = glycyl-tRNA(Gly) + AMP + diphosphate. Its function is as follows. Catalyzes the attachment of glycine to tRNA(Gly). This Corynebacterium efficiens (strain DSM 44549 / YS-314 / AJ 12310 / JCM 11189 / NBRC 100395) protein is Glycine--tRNA ligase.